The primary structure comprises 327 residues: Beta-1,4-galactosyltransferase 7 (327 aa).

Residues 1 to 30 (MFPSRRKAAQLPWEDGRSGLLSGGLPRKCS) are Cytoplasmic-facing. The chain crosses the membrane as a helical; Signal-anchor for type II membrane protein span at residues 31-51 (VFHLFVACLSLGFFSLLWLQL). Topologically, residues 52–327 (SCSGDVARAV…KTATPWCTFS (276 aa)) are lumenal. The tract at residues 63 to 87 (GQGQETSGPPRACPPEPPPEHWEED) is disordered. UDP-alpha-D-galactose contacts are provided by residues 100 to 104 (PFRER) and 139 to 141 (FNR). Asn-154 is a glycosylation site (N-linked (GlcNAc...) asparagine). Residues 164–165 (VD), Tyr-194, and Trp-224 each bind UDP-alpha-D-galactose. Asp-165 lines the Mn(2+) pocket. Residue 226-229 (REDD) coordinates N-acetyl-D-glucosamine. Position 257 (His-257) interacts with Mn(2+). UDP-alpha-D-galactose-binding positions include 257-259 (HLH) and Arg-266. Cys-316 and Cys-324 are joined by a disulfide.

Belongs to the glycosyltransferase 7 family. It depends on Mn(2+) as a cofactor. In terms of tissue distribution, high expression in heart, pancreas and liver, medium in placenta and kidney, low in brain, skeletal muscle and lung.

The protein resides in the golgi apparatus. Its subcellular location is the golgi stack membrane. It catalyses the reaction 3-O-(beta-D-xylosyl)-L-seryl-[protein] + UDP-alpha-D-galactose = 3-O-(beta-D-galactosyl-(1-&gt;4)-beta-D-xylosyl)-L-seryl-[protein] + UDP + H(+). It participates in protein modification; protein glycosylation. In terms of biological role, required for the biosynthesis of the tetrasaccharide linkage region of proteoglycans, especially for small proteoglycans in skin fibroblasts. In Homo sapiens (Human), this protein is Beta-1,4-galactosyltransferase 7 (B4GALT7).